A 603-amino-acid polypeptide reads, in one-letter code: Flavin-dependent halogenase chlA (603 aa).

The FAD site is built by Gly16, Ala19, and Glu59. Chloride is bound by residues Thr352 and Gly353.

This sequence belongs to the flavin-dependent halogenase family.

The enzyme catalyses 2,4,6-trihydroxyphenylhexan-1-one + FADH2 + chloride + O2 = (3-chloro-2,4,6-trihydroxyphenyl)hexan-1-one + FAD + 2 H2O + H(+). It catalyses the reaction (3-chloro-2,4,6-trihydroxyphenyl)hexan-1-one + FADH2 + chloride + O2 = (3,5-dichloro-2,4,6-trihydroxyphenyl)hexan-1-one + FAD + 2 H2O. In terms of biological role, flavin-dependent halogenase; part of the gene cluster that mediates the biosynthesis of DIF-1 (Differentiation Inducing Factor-1), a signal molecule involved in the differentiation of pstO (prestalk-O) cells. The three-step process begins with the formation of (2,4,6-trihydroxyphenyl)-1-hexan-1-one (THPH) by the polyketide synthase StlB. THPH is then dichlorinated by the flavin-dependent halogenase ChlA. The last step of DIF-1 biosynthesis is the O-methylation of dichloro-THPH (or des-methyl-DIF-1) by the methyltransferase DmtA to yield DIF-1. The chain is Flavin-dependent halogenase chlA from Dictyostelium discoideum (Social amoeba).